A 76-amino-acid polypeptide reads, in one-letter code: Acyl carrier protein (76 aa).

A Carrier domain is found at 1 to 75; the sequence is MVLEKIKTLM…DVVLYIEKNL (75 aa). Position 35 is an O-(pantetheine 4'-phosphoryl)serine (Ser-35).

This sequence belongs to the acyl carrier protein (ACP) family. 4'-phosphopantetheine is transferred from CoA to a specific serine of apo-ACP by AcpS. This modification is essential for activity because fatty acids are bound in thioester linkage to the sulfhydryl of the prosthetic group.

The protein localises to the cytoplasm. The protein operates within lipid metabolism; fatty acid biosynthesis. In terms of biological role, carrier of the growing fatty acid chain in fatty acid biosynthesis. This is Acyl carrier protein from Phytoplasma australiense.